Consider the following 159-residue polypeptide: Endoribonuclease YbeY (159 aa).

Zn(2+)-binding residues include His-114, His-118, and His-124.

Belongs to the endoribonuclease YbeY family. The cofactor is Zn(2+).

Its subcellular location is the cytoplasm. Its function is as follows. Single strand-specific metallo-endoribonuclease involved in late-stage 70S ribosome quality control and in maturation of the 3' terminus of the 16S rRNA. This chain is Endoribonuclease YbeY, found in Pectobacterium carotovorum subsp. carotovorum (strain PC1).